A 658-amino-acid polypeptide reads, in one-letter code: Exoribonuclease 2 (658 aa).

Residues 189 to 531 enclose the RNB domain; it reads REDLTALHFI…NHRLIKAVLT (343 aa). One can recognise an S1 motif domain in the interval 576–658; that stretch reads KPTFQAEIQD…ETRSIVGTLC (83 aa).

It belongs to the RNR ribonuclease family. RNase II subfamily.

The protein localises to the cytoplasm. It carries out the reaction Exonucleolytic cleavage in the 3'- to 5'-direction to yield nucleoside 5'-phosphates.. Its function is as follows. Involved in mRNA degradation. Hydrolyzes single-stranded polyribonucleotides processively in the 3' to 5' direction. The polypeptide is Exoribonuclease 2 (Pasteurella multocida (strain Pm70)).